We begin with the raw amino-acid sequence, 343 residues long: L-threonine 3-dehydrogenase (343 aa).

Cys-40 contributes to the Zn(2+) binding site. Active-site charge relay system residues include Thr-42 and His-45. Positions 65, 66, 95, 98, 101, and 109 each coordinate Zn(2+). Residues Ile-177, Asp-197, Arg-202, 264 to 266 (LGI), and 288 to 289 (IY) contribute to the NAD(+) site.

This sequence belongs to the zinc-containing alcohol dehydrogenase family. Homotetramer. Zn(2+) serves as cofactor.

The protein resides in the cytoplasm. It carries out the reaction L-threonine + NAD(+) = (2S)-2-amino-3-oxobutanoate + NADH + H(+). It functions in the pathway amino-acid degradation; L-threonine degradation via oxydo-reductase pathway; glycine from L-threonine: step 1/2. Catalyzes the NAD(+)-dependent oxidation of L-threonine to 2-amino-3-ketobutyrate. In Vibrio parahaemolyticus serotype O3:K6 (strain RIMD 2210633), this protein is L-threonine 3-dehydrogenase.